The following is a 312-amino-acid chain: Beta-ketoacyl-[acyl-carrier-protein] synthase III (312 aa).

Catalysis depends on residues cysteine 112 and histidine 237. The segment at 238-242 is ACP-binding; sequence QANIR. The active site involves asparagine 267.

This sequence belongs to the thiolase-like superfamily. FabH family. As to quaternary structure, homodimer.

It localises to the cytoplasm. It catalyses the reaction malonyl-[ACP] + acetyl-CoA + H(+) = 3-oxobutanoyl-[ACP] + CO2 + CoA. It participates in lipid metabolism; fatty acid biosynthesis. In terms of biological role, catalyzes the condensation reaction of fatty acid synthesis by the addition to an acyl acceptor of two carbons from malonyl-ACP. Catalyzes the first condensation reaction which initiates fatty acid synthesis and may therefore play a role in governing the total rate of fatty acid production. Possesses both acetoacetyl-ACP synthase and acetyl transacylase activities. Its substrate specificity determines the biosynthesis of branched-chain and/or straight-chain of fatty acids. The polypeptide is Beta-ketoacyl-[acyl-carrier-protein] synthase III (Oceanobacillus iheyensis (strain DSM 14371 / CIP 107618 / JCM 11309 / KCTC 3954 / HTE831)).